Consider the following 528-residue polypeptide: Membrane protein insertase YidC (528 aa).

The next 5 membrane-spanning stretches (helical) occupy residues 13 to 33, 336 to 356, 406 to 426, 446 to 466, and 481 to 501; these read ILLA…FFIP, WGWA…PLTY, LPIL…LNAI, YFIL…ITPM, and PVIF…YWFV.

This sequence belongs to the OXA1/ALB3/YidC family. Type 1 subfamily. As to quaternary structure, interacts with the Sec translocase complex via SecD. Specifically interacts with transmembrane segments of nascent integral membrane proteins during membrane integration.

It localises to the cell inner membrane. Its function is as follows. Required for the insertion and/or proper folding and/or complex formation of integral membrane proteins into the membrane. Involved in integration of membrane proteins that insert both dependently and independently of the Sec translocase complex, as well as at least some lipoproteins. Aids folding of multispanning membrane proteins. This is Membrane protein insertase YidC from Campylobacter jejuni subsp. jejuni serotype O:2 (strain ATCC 700819 / NCTC 11168).